Here is a 306-residue protein sequence, read N- to C-terminus: uncharacterized protein (306 aa).

8 helical membrane-spanning segments follow: residues Leu7–Ala27, Val30–Leu50, Leu68–Leu88, Ala95–Ile115, Ala144–Phe164, Ile194–Val214, Ile232–Phe252, and Thr274–Pro294.

The protein resides in the cell membrane. This is an uncharacterized protein from Mycoplasma genitalium (strain ATCC 33530 / DSM 19775 / NCTC 10195 / G37) (Mycoplasmoides genitalium).